The following is a 311-amino-acid chain: Aurora kinase (311 aa).

A Protein kinase domain is found at phenylalanine 20 to leucine 300. Lysine 49 is a binding site for ATP. Catalysis depends on aspartate 143, which acts as the Proton acceptor. The tract at residues aspartate 189–glutamate 216 is activation loop. Position 205 is a phosphothreonine; by autocatalysis (threonine 205). The Destruction (D)-box signature appears at methionine 280–phenylalanine 299.

This sequence belongs to the protein kinase superfamily. Ser/Thr protein kinase family. Aurora subfamily. In terms of assembly, interacts with EB1 (via C-terminal residues 101-238). In terms of processing, phosphorylated in mitosis and cytokinesis. Activated by autophosphorylation at Thr-205.

The protein localises to the nucleus. It localises to the cytoplasm. The protein resides in the cytoskeleton. It is found in the microtubule organizing center. Its subcellular location is the centrosome. The protein localises to the spindle. It localises to the spindle pole. The protein resides in the nucleus membrane. It catalyses the reaction L-seryl-[protein] + ATP = O-phospho-L-seryl-[protein] + ADP + H(+). The catalysed reaction is L-threonyl-[protein] + ATP = O-phospho-L-threonyl-[protein] + ADP + H(+). Its activity is regulated as follows. Activated by cell-cycle phase specific phosphorylation. Inhibited by ATP-competitive inhibitors N-[4-[[6-Methoxy-7-[3-(4-morpholinyl)propoxy]-4-quinazolinyl]amino]phenyl]benzamide (ZM447439) and cyclopropanecarboxylic acid-(3-(4-(3-trifluoromethylphenylamino)-pyrimidin-2-ylamino)-phenyl)-amide (CFPPA). Inhibition leads to reduced growth, increased cytokinesis, microtubular defects, and increased ploidy of the cells. Functionally, involved in regulation of the cell cycle. Required for mitotic cell division and cytokinesis. Based on its localization to centrosomes and spindle microtubules, as well as to various cytoskeletal components such as the median body, parental attachment disk, and anterior and posterior-lateral paraflagellar dense rods, may coordinate reorganization and segregation of tubulin-containing structures during mitosis and cytokinesis. May regulate microtubule disassembly by phosphorylating cytoskeletal proteins leading to their destabilization. Phosphorylates EB1 at 'Ser-148' in vitro. Phosphorylates histone H3 in vitro. This is Aurora kinase from Giardia intestinalis (strain ATCC 50803 / WB clone C6) (Giardia lamblia).